Consider the following 96-residue polypeptide: Acylphosphatase (96 aa).

The 88-residue stretch at 9 to 96 (CAEIYVSGRV…DTFTDFFIKR (88 aa)) folds into the Acylphosphatase-like domain. Catalysis depends on residues arginine 24 and asparagine 42.

Belongs to the acylphosphatase family.

It catalyses the reaction an acyl phosphate + H2O = a carboxylate + phosphate + H(+). The protein is Acylphosphatase (acyP) of Methanococcoides burtonii (strain DSM 6242 / NBRC 107633 / OCM 468 / ACE-M).